Here is a 328-residue protein sequence, read N- to C-terminus: Coiled-coil domain-containing protein 54 (328 aa).

A coiled-coil region spans residues 93-148 (KIQEKTDFFQKQMQVLETKMNVNENKQCATAEDIFSVKEDVDALKKKVTELGNQNS). Residue Thr-182 is modified to Phosphothreonine.

This is Coiled-coil domain-containing protein 54 (CCDC54) from Bos taurus (Bovine).